We begin with the raw amino-acid sequence, 305 residues long: N-acetylneuraminate lyase 2 (305 aa).

The aceneuramate site is built by serine 47 and threonine 48. Catalysis depends on tyrosine 137, which acts as the Proton donor. Residue lysine 165 is the Schiff-base intermediate with substrate of the active site. The aceneuramate site is built by threonine 167, glycine 189, aspartate 191, glutamate 192, and serine 208.

Belongs to the DapA family. NanA subfamily. Homotetramer.

It is found in the cytoplasm. It carries out the reaction aceneuramate = aldehydo-N-acetyl-D-mannosamine + pyruvate. It participates in amino-sugar metabolism; N-acetylneuraminate degradation; D-fructose 6-phosphate from N-acetylneuraminate: step 1/5. Functionally, catalyzes the reversible aldol cleavage of N-acetylneuraminic acid (sialic acid; Neu5Ac) to form pyruvate and N-acetylmannosamine (ManNAc) via a Schiff base intermediate. This Escherichia coli O6:H1 (strain CFT073 / ATCC 700928 / UPEC) protein is N-acetylneuraminate lyase 2.